Reading from the N-terminus, the 1567-residue chain is MIVEKILALRTCANNMADHCGLIWPMAGPVECKFWKPSGLHENGLTGLLWGKGVGAHLSAHADARWVVCEVAVDEMLQLAEEGMIKFPRATVLFVGNRSQALDYIAANMPLYGAALQLAAPAAPAHVHMPAAEPSAPATQATSATLPTPATPSTQATPSTQSTQSTQSTEATQSTEATPVATVAAAPPPPGQQHDVMAKKTETGVYGSTLTGADQSRLVAGYGSTETAGDHSDLIAGYGSTGTAGSDSSILAGYGSTQTAAGRSTLTAGYGSTQTAQEGSRLTSGYGSTATSGSDSAVISGYGSTQTAGSESSLTAGYGSTQTARKGSDITAGYGSTGTAGSDSALIAGYGSTQTAGSESSLTAGYGSTQTARKGSDVTAGYGSTGTAGADSTLIAGYGSTQTAGGESSLTAGYGSTQTARQGSDITAGYGSTGTAGADSTLIAGYGSTQTSGSDSSLTAGYGSTQTARKGSDITAGYGSTGTAGSDSSLIAGYGSTQTAGSESSLTAGYGSTQTAQQDSSLTTGYGSTSTAGHDSSLIAGYGSTQTAGYDSTLTAGYGSTQTAQQDSSLTTGYGSTSTAGADSTLIAGYGSTQTAGSDSSLTAGYGSTQTAREGSDVTAGYGSTGTAGADSTLIAGYGSTQTSGSDSSLTAGYGSTQTARKGSDVTAGYGSTGTAGADSTLIAGYGSTQTSGSDSSLTAGYGSTQTARKGSDVTAGYGSTGTAGADSTLIAGYGSTQTSGSDSSLTAGYGSTQTARKGSDVTAGYGSTGTAGADSTLIAGYGSTQTSGSDSSLTAGYGSTQTARKGSDITAGYGSTGTAGADSTLIAGYGSTQTSGSDSSLTAGYGSTQTAREGSDVTAGYGSTGTAGADSTLISGYGSTQTAGSDSSLTAGYGSTQTARKGSDVTAGYGSTGTAGADSTLIAGYGSTQTSGSDSSLTAGYGSTQTARKGSDMTAGYGSTGTAGADSTLIAGYGSTQTSGSDSSLTAGYGSTQTAREGSDVTAGYGSTGTAGADSTLIAGYGSTQTAGSDSSLTAGYGSTQTARQGSDVTAGYGSTGTAGADSTLIAGYGSTQTAGSDSSLTAGYGSTQTARQGSDITAGYGSTGTAGADSSLIAGYGSTQTAGYDSNLTAGYGSTQTAREDSSLTAGYGSTSTAGHDSSLIAGYGSTQTAGYNSILTTGYGSTQTAQESSSLTAGYGSTSTAGYDSTLTAGYGSTQTAGYKSTLTAGYGSNSTAGHESSLIAGYGSTQIAGYESTLTAGYGSSLTTQQNSSLTAGYGSTEIAGYASTLMAGYGSSQTAGYESTLTAGYGSTQMAEHSSSLTAGYGSTGIAGQDSSLIAGYGSSLTSGVRSFLTAGYGSNMIASYGSSLIAGHECTQIAGHKSMLIAGKGSFQTAGARSTLIGGAASVQTAGDRSKLIAGADSTQTAGDRSKLLAGRNSYLTAGDRSKLTAGDDSTLMAGDRSKLTAGKNSVLTAGANSRLIGSLGSTLSGGENSTLIFRCWDGERYTNLVVRTGEQGVESDIPYQVDDEGNLVGKADDDLVLDYDPGMILDGQCSPGTGEELRDV.

A compositionally biased stretch (low complexity) spans 130-185 (PAAEPSAPATQATSATLPTPATPSTQATPSTQSTQSTQSTEATQSTEATPVATVAA). 13 disordered regions span residues 130–195 (PAAE…QQHD), 270–329 (YGST…KGSD), 356–378 (AGSE…GSDV), 449–474 (TQTS…GSDI), 502–529 (SESS…YGST), 594–620 (QTAG…DVTA), 642–668 (QTSG…DVTA), 689–716 (TQTS…DVTA), 738–764 (QTSG…DVTA), 785–810 (TQTS…GSDI), 833–860 (TQTS…DVTA), 929–959 (TQTS…AGYG), and 977–1004 (TQTS…DVTA). Residues 270–282 (YGSTQTAQEGSRL) show a composition bias toward polar residues. The span at 283 to 296 (TSGYGSTATSGSDS) shows a compositional bias: low complexity. Polar residues-rich tracts occupy residues 302 to 325 (YGST…QTAR), 356 to 373 (AGSE…QTAR), 449 to 469 (TQTS…QTAR), and 502 to 519 (SESS…AQQD). Residues 520-529 (SSLTTGYGST) show a composition bias toward low complexity. Composition is skewed to polar residues over residues 594–613 (QTAG…QTAR), 642–661 (QTSG…QTAR), 689–709 (TQTS…QTAR), 738–757 (QTSG…QTAR), 785–805 (TQTS…QTAR), 833–853 (TQTS…QTAR), 929–949 (TQTS…QTAR), and 977–997 (TQTS…QTAR).

The protein belongs to the bacterial ice nucleation protein family.

The protein localises to the cell outer membrane. Functionally, ice nucleation proteins enable bacteria to nucleate crystallization in supercooled water. This is Ice nucleation protein (inaX) from Xanthomonas campestris pv. translucens.